Reading from the N-terminus, the 144-residue chain is Large ribosomal subunit protein uL11 (144 aa).

Belongs to the universal ribosomal protein uL11 family. As to quaternary structure, part of the ribosomal stalk of the 50S ribosomal subunit. Interacts with L10 and the large rRNA to form the base of the stalk. L10 forms an elongated spine to which L12 dimers bind in a sequential fashion forming a multimeric L10(L12)X complex. In terms of processing, one or more lysine residues are methylated.

In terms of biological role, forms part of the ribosomal stalk which helps the ribosome interact with GTP-bound translation factors. This chain is Large ribosomal subunit protein uL11, found in Neisseria meningitidis serogroup B (strain ATCC BAA-335 / MC58).